The chain runs to 320 residues: Myeloid-associated differentiation marker (320 aa).

MARVEL domains follow at residues 25–157 (ALTQ…ARPG) and 162–317 (YMAT…RLVF). The next 8 helical transmembrane spans lie at 35-55 (LLQL…GAWT), 61-81 (WAMF…IVEL), 95-115 (FPIT…IIYP), 131-151 (AIAA…EVAW), 165-185 (TVPG…FAFI), 197-217 (LEWC…TILL), 233-253 (FLSG…VLWP), and 292-312 (LAVS…LVYS).

This sequence belongs to the MAL family.

Its subcellular location is the membrane. This chain is Myeloid-associated differentiation marker (Myadm), found in Mus musculus (Mouse).